The chain runs to 485 residues: 2-succinylbenzoate--CoA ligase (485 aa).

The protein belongs to the ATP-dependent AMP-binding enzyme family. MenE subfamily.

It carries out the reaction 2-succinylbenzoate + ATP + CoA = 2-succinylbenzoyl-CoA + AMP + diphosphate. The protein operates within quinol/quinone metabolism; 1,4-dihydroxy-2-naphthoate biosynthesis; 1,4-dihydroxy-2-naphthoate from chorismate: step 5/7. Its pathway is quinol/quinone metabolism; menaquinone biosynthesis. In terms of biological role, converts 2-succinylbenzoate (OSB) to 2-succinylbenzoyl-CoA (OSB-CoA). The protein is 2-succinylbenzoate--CoA ligase of Enterococcus faecalis (strain ATCC 700802 / V583).